A 225-amino-acid polypeptide reads, in one-letter code: Deoxyribose-phosphate aldolase (225 aa).

Aspartate 94 functions as the Proton donor/acceptor in the catalytic mechanism. The active-site Schiff-base intermediate with acetaldehyde is lysine 158. Lysine 187 (proton donor/acceptor) is an active-site residue.

The protein belongs to the DeoC/FbaB aldolase family. DeoC type 1 subfamily.

It localises to the cytoplasm. The catalysed reaction is 2-deoxy-D-ribose 5-phosphate = D-glyceraldehyde 3-phosphate + acetaldehyde. It functions in the pathway carbohydrate degradation; 2-deoxy-D-ribose 1-phosphate degradation; D-glyceraldehyde 3-phosphate and acetaldehyde from 2-deoxy-alpha-D-ribose 1-phosphate: step 2/2. In terms of biological role, catalyzes a reversible aldol reaction between acetaldehyde and D-glyceraldehyde 3-phosphate to generate 2-deoxy-D-ribose 5-phosphate. The chain is Deoxyribose-phosphate aldolase from Thermococcus gammatolerans (strain DSM 15229 / JCM 11827 / EJ3).